Reading from the N-terminus, the 243-residue chain is Tetraspanin-36 (243 aa).

The Cytoplasmic portion of the chain corresponds to 1–9 (MDCGIITSK). The helical transmembrane segment at 10 to 30 (TILLLLSLIFWAAGAALAYVG) threads the bilayer. Residues 31–49 (SYVIKSYNNFEDFMSDRHT) lie on the Lumenal side of the membrane. Residues 50–70 (LIPAAIIIGVAVVMFIIGFVG) form a helical membrane-spanning segment. The Cytoplasmic portion of the chain corresponds to 71–84 (CCATLRESKVGLGL). Residues 85–105 (FLIIIMLIFAAEVTAFVFGII) traverse the membrane as a helical segment. Over 106 to 208 (YRGRIRGDLE…QVLQDVLSYA (103 aa)) the chain is Lumenal. Residues Asn149, Asn163, and Asn174 are each glycosylated (N-linked (GlcNAc...) asparagine). The chain crosses the membrane as a helical span at residues 209–229 (MLVILGFAIIKFFGMLSVCVI). Topologically, residues 230-243 (TCKSKKNEYQPLYA) are cytoplasmic.

This sequence belongs to the tetraspanin (TM4SF) family. N-glycosylated. Strongly expressed in melanophores and xanthophores. Also detected in eye, brain, heart, skin, fin, testis and ovary.

The protein resides in the golgi apparatus membrane. It is found in the endoplasmic reticulum membrane. In terms of biological role, plays a role in migration and segregation of pigment cells (melanophores and xanthophores). Contributes to pigment stripe patterning in the epidermis. The chain is Tetraspanin-36 from Danio rerio (Zebrafish).